We begin with the raw amino-acid sequence, 469 residues long: Glutamate--tRNA ligase (469 aa).

Positions 9–19 (PSPTGFLHVGG) match the 'HIGH' region motif. Cysteine 98, cysteine 100, cysteine 125, and aspartate 127 together coordinate Zn(2+). The 'KMSKS' region motif lies at 236 to 240 (KLSKR). ATP is bound at residue lysine 239.

This sequence belongs to the class-I aminoacyl-tRNA synthetase family. Glutamate--tRNA ligase type 1 subfamily. In terms of assembly, monomer. It depends on Zn(2+) as a cofactor.

The protein resides in the cytoplasm. The catalysed reaction is tRNA(Glu) + L-glutamate + ATP = L-glutamyl-tRNA(Glu) + AMP + diphosphate. Catalyzes the attachment of glutamate to tRNA(Glu) in a two-step reaction: glutamate is first activated by ATP to form Glu-AMP and then transferred to the acceptor end of tRNA(Glu). The sequence is that of Glutamate--tRNA ligase from Shewanella sp. (strain MR-4).